The following is a 216-amino-acid chain: Transmembrane protein 163a (216 aa).

The Cytoplasmic portion of the chain corresponds to 1-15 (MRLKPHEAQSYRKKA). Residues 16–36 (LWVSWISIVVTLILAVAGFTV) traverse the membrane as a helical segment. At 37–43 (SFMRHSA) the chain is on the extracellular side. The chain crosses the membrane as a helical span at residues 44–64 (SAFGFAFDATLDVLSSIIVLW). Residues 65 to 77 (RYSNAAAVHSAHR) lie on the Cytoplasmic side of the membrane. Residues 78 to 98 (EYIACVILGVIFILSSLCILG) form a helical membrane-spanning segment. Residues 99–114 (KAIHDLATKLLPEVDD) lie on the Extracellular side of the membrane. A helical transmembrane segment spans residues 115–135 (FLFSVSIVSGLMCVILAVAKF). The Cytoplasmic portion of the chain corresponds to 136-144 (MLGRILTSR). Residues 145–165 (ALITDGFNSMVGGIMGFSILI) form a helical membrane-spanning segment. The Extracellular segment spans residues 166 to 182 (SAEVFRHYPNVWYLDGT). A helical transmembrane segment spans residues 183-203 (IGILIGLVIQAYGVKLLVDMI). The Cytoplasmic portion of the chain corresponds to 204 to 216 (PRVRQTRNYERFE).

The protein belongs to the TMEM163 family.

It localises to the cytoplasmic vesicle. Its subcellular location is the secretory vesicle. It is found in the synaptic vesicle membrane. The protein resides in the early endosome membrane. The protein localises to the late endosome membrane. It localises to the lysosome membrane. Its subcellular location is the cell membrane. The enzyme catalyses Zn(2+)(in) = Zn(2+)(out). Zinc ion transporter that mediates zinc efflux and plays a crucial role in intracellular zinc homeostasis. Binds the divalent cations Zn(2+), Ni(2+), and to a minor extent Cu(2+). Is a functional modulator of P2X purinoceptors, including P2RX1, P2RX3, P2RX4 and P2RX7. Plays a role in central nervous system development and is required for myelination, and survival and proliferation of oligodendrocytes. This chain is Transmembrane protein 163a, found in Danio rerio (Zebrafish).